A 375-amino-acid chain; its full sequence is Vasculin (375 aa).

Disordered regions lie at residues 49–109 (SSDA…TSEI) and 356–375 (DSVQKEDSETSSSSDTSDDE). Residues 96–108 (MKSQLHSENNTSE) are compositionally biased toward polar residues. The segment covering 365–375 (TSSSSDTSDDE) has biased composition (low complexity).

Belongs to the vasculin family.

Its subcellular location is the nucleus. Functionally, functions as a GC-rich promoter-specific transactivating transcription factor. This is Vasculin (gpbp1) from Xenopus tropicalis (Western clawed frog).